The following is a 696-amino-acid chain: Tegument protein UL47 (696 aa).

Basic residues-rich tracts occupy residues 1–15 and 70–81; these read MSVRGHAVRRRRAST and RRRREARGHPGS. Disordered regions lie at residues 1 to 39 and 54 to 130; these read MSVRGHAVRRRRASTRSHAPSAHRADSPVEDEPEGGGVG and SEVE…YLGP. Residues 57–84 are RNA-binding; it reads EAAGEMASEEPPPRRRREARGHPGSRRA. Positions 70 to 84 match the Nuclear localization signal motif; that stretch reads RRRREARGHPGSRRA. The segment covering 87–103 has biased composition (low complexity); it reads ARAAAPPRRASFPRPRS. Residues 650–673 carry the Nuclear export signal motif; the sequence is SVLGPRVRVVDIMAQFRKLLMGDE.

Belongs to the alphaherpesvirinae HHV-1 UL47 family. In terms of assembly, interacts with US3 kinase. Interacts with UL31 and UL34; these interactions seem important for efficient virion nuclear egress. Interacts with UL41/VHS. In terms of processing, phosphorylated by US3. This phosphorylation is required for proper nuclear localization.

It is found in the virion tegument. Its subcellular location is the host nucleus. The protein localises to the host cytoplasm. Its function is as follows. Tegument protein that can bind to various RNA transcripts. Plays a role in the attenuation of selective viral and cellular mRNA degradation by modulating the activity of host shutoff RNase UL41/VHS. Also plays a role in the primary envelopment of virions in the perinuclear space, probably by interacting with two nuclear egress proteins UL31 and UL34. This is Tegument protein UL47 from Human herpesvirus 2 (strain HG52) (HHV-2).